The chain runs to 66 residues: Panusin (66 aa).

The N-terminal stretch at M1–G22 is a signal peptide. The propeptide occupies E23 to P26. 3 disulfides stabilise this stretch: C32-C54, C39-C61, and C44-C60. Y65 is subject to Tyrosine amide.

In terms of assembly, forms dimers and higher-order oligomers. In terms of processing, contains 3 disulfide bonds.

Functionally, antimicrobial peptide. Has antibacterial activity against Gram-positive bacteria S.aureus ATCC 29737 and B.subtilis ATCC 6633 as well as against Gram-negative bacteria E.coli ATCC 10536 and K.pneumoniae ATCC 10031. This chain is Panusin, found in Panulirus argus (Caribbean spiny lobster).